We begin with the raw amino-acid sequence, 1638 residues long: DNA polymerase III PolC-type (1638 aa).

A disordered region spans residues 193–212; sequence SEIKKQRSEERESKNTREAK. Residues 194-212 show a composition bias toward basic and acidic residues; the sequence is EIKKQRSEERESKNTREAK. The Exonuclease domain occupies 596–752; that stretch reads YVVFDVETTG…FDAEATGRLL (157 aa).

The protein belongs to the DNA polymerase type-C family. PolC subfamily.

It is found in the cytoplasm. It catalyses the reaction DNA(n) + a 2'-deoxyribonucleoside 5'-triphosphate = DNA(n+1) + diphosphate. Its function is as follows. Required for replicative DNA synthesis. This DNA polymerase also exhibits 3' to 5' exonuclease activity. In Lactococcus lactis subsp. lactis (strain IL1403) (Streptococcus lactis), this protein is DNA polymerase III PolC-type.